Consider the following 603-residue polypeptide: Golgin subfamily A member 8B (603 aa).

Disordered regions lie at residues 1–82, 95–125, 398–419, and 460–492; these read MAEE…NSRS, LKQQ…ELEG, TSAE…ESSG, and PGDS…GAAG. Low complexity predominate over residues 46–66; it reads AASGGCHSSEASSSASSSLHA. The span at 69-82 shows a compositional bias: polar residues; that stretch reads SPCQEQAAVLNSRS. Coiled-coil stretches lie at residues 82 to 173 and 212 to 440; these read SIKI…GELE and LKGH…LELG. Basic and acidic residues predominate over residues 100–124; that stretch reads KQVEHQLEEEKKANNEKQKAERELE. The span at 469-482 shows a compositional bias: gly residues; it reads PGGGHHQAGPGQGG. Residues 491–603 form a golgi-targeting domain region; it reads AGDGVAACGS…CWAWLPRRRR (113 aa).

This sequence belongs to the GOLGA8 family. As to expression, highly expressed in brain, heart and kidney. Detected at lower levels in liver, thymus, spleen, lung and peripheral blood leukocytes.

It localises to the golgi apparatus. The protein localises to the golgi stack membrane. In terms of biological role, may be involved in maintaining Golgi structure. This chain is Golgin subfamily A member 8B (GOLGA8B), found in Homo sapiens (Human).